The primary structure comprises 449 residues: Kynurenine 3-monooxygenase (449 aa).

The protein belongs to the aromatic-ring hydroxylase family. KMO subfamily. It depends on FAD as a cofactor.

It carries out the reaction L-kynurenine + NADPH + O2 + H(+) = 3-hydroxy-L-kynurenine + NADP(+) + H2O. It functions in the pathway cofactor biosynthesis; NAD(+) biosynthesis; quinolinate from L-kynurenine: step 1/3. Catalyzes the hydroxylation of L-kynurenine (L-Kyn) to form 3-hydroxy-L-kynurenine (L-3OHKyn). Required for synthesis of quinolinic acid. In Cytophaga hutchinsonii (strain ATCC 33406 / DSM 1761 / CIP 103989 / NBRC 15051 / NCIMB 9469 / D465), this protein is Kynurenine 3-monooxygenase.